A 371-amino-acid polypeptide reads, in one-letter code: DNA replication and repair protein RecF (371 aa).

30 to 37 lines the ATP pocket; the sequence is GKNGQGKT.

It belongs to the RecF family.

It localises to the cytoplasm. Its function is as follows. The RecF protein is involved in DNA metabolism; it is required for DNA replication and normal SOS inducibility. RecF binds preferentially to single-stranded, linear DNA. It also seems to bind ATP. The chain is DNA replication and repair protein RecF from Clostridioides difficile (strain 630) (Peptoclostridium difficile).